We begin with the raw amino-acid sequence, 785 residues long: Probable ATP-dependent RNA helicase ddx17 (785 aa).

4 stretches are compositionally biased toward low complexity: residues 1–11, 18–37, 49–95, and 105–177; these read MSYNSSNSGSG, SGNS…GNRS, SYNR…YGPS, and GSSS…NGYS. The interval 1 to 233 is disordered; that stretch reads MSYNSSNSGS…TPSTSYNGGS (233 aa). The segment covering 178–191 has biased composition (polar residues); that stretch reads KPTSNYSYSNGYTG. The segment covering 192-233 has biased composition (low complexity); sequence PTTNYSSYSNGYSTPPTSTSTSSSSTTTTTTTTPSTSYNGGS. A Q motif motif is present at residues 384–412; that stretch reads MQFTQAPFPGYLMKEIIGAGFPNPTPIQS. The Helicase ATP-binding domain maps to 415–590; that stretch reads WPIALKGRDI…HDFLTDHIQV (176 aa). 428–435 lines the ATP pocket; sequence AKTGSGKT. The DEAD box motif lies at 538 to 541; that stretch reads DEAD. The Helicase C-terminal domain occupies 602-763; it reads NVRQIVEVCQ…KIPIELSNLS (162 aa). Residues 764–774 are compositionally biased toward polar residues; the sequence is VTPSTSSNTKK. The segment at 764 to 785 is disordered; sequence VTPSTSSNTKKFSPYPTYSKRY.

Belongs to the DEAD box helicase family. DDX5/DBP2 subfamily.

The protein resides in the cytoplasm. Its subcellular location is the nucleus. It carries out the reaction ATP + H2O = ADP + phosphate + H(+). In terms of biological role, probable ATP-dependent RNA helicase which may be involved nonsense-mediated mRNA decay and ribosome biogenesis through rRNA processing. The protein is Probable ATP-dependent RNA helicase ddx17 (ddx17) of Dictyostelium discoideum (Social amoeba).